The sequence spans 124 residues: Fluoride-specific ion channel FluC (124 aa).

The next 4 helical transmembrane spans lie at 5–27 (LFVALGGSIGAVLRYLISILMLQ), 42–62 (ILGSFLMGVVYALGQVSEVSP), 63–83 (EIKAFIGVGMLGALTTFSTFS), and 95–115 (LVKAILNVVVNVGVCIFVVYL). Na(+)-binding residues include Gly-74 and Thr-77.

Belongs to the fluoride channel Fluc/FEX (TC 1.A.43) family.

It is found in the cell inner membrane. The catalysed reaction is fluoride(in) = fluoride(out). With respect to regulation, na(+) is not transported, but it plays an essential structural role and its presence is essential for fluoride channel function. In terms of biological role, fluoride-specific ion channel. Important for reducing fluoride concentration in the cell, thus reducing its toxicity. This chain is Fluoride-specific ion channel FluC, found in Shewanella piezotolerans (strain WP3 / JCM 13877).